The chain runs to 448 residues: Death-associated protein kinase 3 (448 aa).

A Protein kinase domain is found at 13-275 (YEMGEELGSG…IAQSLEHSWI (263 aa)). ATP-binding positions include 19–27 (LGSGQFAIV) and K42. D139 (proton acceptor) is an active-site residue. Residues 161-204 (DFGIAHRIEAGSEFKNIFGTPEFVAPEIVNYEPLGLEADMWSIG) are activation segment. T180 and T225 each carry phosphothreonine. Phosphothreonine; by autocatalysis is present on T265. The residue at position 265 (T265) is a Phosphothreonine; by ROCK1. S304 bears the Phosphoserine; by DAPK1 mark. Residue S306 is modified to Phosphoserine; by autocatalysis and DAPK1. A phosphoserine; by DAPK1 mark is found at S307, S313, and S321. Residues 390-448 (AQEEARAALLGAGGLKRRLCRLENRYDALAAQVAAEVQFVRDLVRALEQERLQAECGVR) are interaction with CDC5L. The tract at residues 422–436 (VAAEVQFVRDLVRAL) is leucine-zipper.

The protein belongs to the protein kinase superfamily. CAMK Ser/Thr protein kinase family. DAP kinase subfamily. As to quaternary structure, homooligomer in its kinase-active form (homotrimers and homodimers are reported); monomeric in its kinase-inactive form. Homodimerization is required for activation segment autophosphorylation. Interacts with DAXX, PAWR, ATF4, NLK, TCF7L2, UBE2D1, UBE2D2, UBE2D3, and CDC5L. Interacts with AR; enhanced by AATF. Interacts with LUZP1; the interaction is likely to occur throughout the cell cycle and reduces the LUZP1-mediated suppression of MYL9 phosphorylation. Mg(2+) serves as cofactor. In terms of processing, ubiquitinated. Ubiquitination mediated by the UBE2D3 E3 ligase does not lead to proteasomal degradation, but influences promyelocytic leukemia protein nuclear bodies (PML-NBs) formation in the nucleus. The phosphorylation status is critical for kinase activity, oligomerization and intracellular localization. Phosphorylation at Thr-180, Thr-225 and Thr-265 is essential for activity. The phosphorylated form is localized in the cytoplasm and nuclear translocation or retention is maximal when it is not phosphorylated. Phosphorylation increases the trimeric form, and its dephosphorylation favors a kinase-inactive monomeric form. As to expression, highly expressed in heart, brain, lung, skeletal muscle, kidney and testis. Lower levels in liver and spleen.

Its subcellular location is the nucleus. It is found in the PML body. The protein localises to the cytoplasm. The protein resides in the cytoskeleton. It localises to the microtubule organizing center. Its subcellular location is the centrosome. It is found in the chromosome. The protein localises to the centromere. The protein resides in the spindle. It localises to the midbody. The enzyme catalyses L-seryl-[protein] + ATP = O-phospho-L-seryl-[protein] + ADP + H(+). It carries out the reaction L-threonyl-[protein] + ATP = O-phospho-L-threonyl-[protein] + ADP + H(+). With respect to regulation, a sequential activation is proposed: autophosphorylation at consensus sites is leading to dimerization of the catalytic domain and activation segment exchange (producing an active confirmation of both kinase modules in trans) followed by phosphorylation at Thr-180 in the activation segment and at other regulatory sites. Phosphorylation at Thr-180, Thr-225 and Thr-265 is essential for activity. Inhibited by pyridone 6 (K00225), a potent, ATP-competitive inhibitor. Phosphorylation at Thr-180, Thr-225 and Thr-265 is essential for activity. Serine/threonine kinase which is involved in the regulation of apoptosis, autophagy, transcription, translation and actin cytoskeleton reorganization. Regulates both type I (caspase-dependent) apoptotic and type II (caspase-independent) autophagic cell deaths signal, depending on the cellular setting. Involved in formation of promyelocytic leukemia protein nuclear body (PML-NB). Involved in apoptosis involving PAWR which mediates cytoplasmic relocation; in vitro phosphorylates PAWR. Regulates myosin phosphorylation in both smooth muscle and non-muscle cells. In smooth muscle, regulates myosin either directly by phosphorylating MYL12B and MYL9 or through inhibition of smooth muscle myosin phosphatase (SMPP1M) via phosphorylation of PPP1R12A; the inhibition of SMPP1M functions to enhance muscle responsiveness to Ca(2+) and promote a contractile state. Phosphorylates MYL12B in non-muscle cells leading to reorganization of actin cytoskeleton such as in regulation of cell polarity and cell migration. Positively regulates canonical Wnt/beta-catenin signaling through interaction with NLK and TCF7L2; disrupts the NLK-TCF7L2 complex thereby influencing the phosphorylation of TCF7L2 by NLK. Phosphorylates STAT3 and enhances its transcriptional activity. Enhances transcription from AR-responsive promoters in a hormone- and kinase-dependent manner. Phosphorylates histone H3 on 'Thr-11' at centromeres during mitosis. Phosphorylates RPL13A on 'Ser-77' upon interferon-gamma activation which is causing RPL13A release from the ribosome, RPL13A association with the GAIT complex and its subsequent involvement in transcript-selective translation inhibition. This chain is Death-associated protein kinase 3 (Dapk3), found in Mus musculus (Mouse).